We begin with the raw amino-acid sequence, 435 residues long: Protein CHLOROPLAST IMPORT APPARATUS 2 (435 aa).

The transit peptide at 1-59 (MSACLSSGGGGAAAYSFELEKVKSPPPSSSTTTTRATSPSSTISESSNSPLAISTRKPR) directs the protein to the chloroplast. Disordered regions lie at residues 21-66 (KVKS…KRPN) and 412-435 (ADQR…SGQR). A compositionally biased stretch (low complexity) spans 29–49 (SSTTTTRATSPSSTISESSNS). A compositionally biased stretch (basic residues) spans 56–65 (RKPRTQRKRP). A CCT domain is found at 383–425 (REASVLRYKEKRRTRLFSKKIRYQVRKLNADQRPRMKGRFVRR).

In terms of tissue distribution, expressed in leaves and young flower buds.

The protein resides in the plastid. Its subcellular location is the chloroplast. The protein localises to the nucleus. Functionally, responsible for specific up-regulation of the translocon genes TOC33 and TOC75 in leaves. Involved in the general chloroplast protein import pathway regulation, including protein import and protein translation efficiencies. The sequence is that of Protein CHLOROPLAST IMPORT APPARATUS 2 (CIA2) from Arabidopsis thaliana (Mouse-ear cress).